The following is a 449-amino-acid chain: Deoxyguanosinetriphosphate triphosphohydrolase-like protein (449 aa).

The disordered stretch occupies residues 1–27 (MTSSVWQERRHGEDKQRRNDHRSPYQR). Over residues 7–27 (QERRHGEDKQRRNDHRSPYQR) the composition is skewed to basic and acidic residues. Residues 59–255 (RLTHSLEVSQ…MELADDIAYA (197 aa)) enclose the HD domain.

This sequence belongs to the dGTPase family. Type 2 subfamily.

The polypeptide is Deoxyguanosinetriphosphate triphosphohydrolase-like protein (Shewanella baltica (strain OS223)).